Reading from the N-terminus, the 113-residue chain is Iron-sulfur cluster insertion protein ErpA (113 aa).

Iron-sulfur cluster is bound by residues cysteine 41, cysteine 105, and cysteine 107.

It belongs to the HesB/IscA family. In terms of assembly, homodimer. It depends on iron-sulfur cluster as a cofactor.

Its function is as follows. Required for insertion of 4Fe-4S clusters for at least IspG. This chain is Iron-sulfur cluster insertion protein ErpA, found in Vibrio vulnificus (strain CMCP6).